Reading from the N-terminus, the 164-residue chain is MKSVITTTISAADAAGRFPSSSDLESIQGNIQRAAARLEAAQKLSGNHEAVVKEAGDACFAKYSYLKNAGEAGDSPEKINKCYRDIDHYMRLINYSLVVGGTGPVDEWGIAGSREVYRALNLPGSAYIAAFTFTRDRLCVPRDMSSQAGVEFTSALDYVINSLC.

Residues Asn-47, Lys-81, Cys-82, Arg-84, His-88, Arg-137, Cys-139, and Arg-142 each contribute to the (2R,3E)-phycoerythrobilin site.

This sequence belongs to the phycobiliprotein family. In terms of assembly, heterododecamer of 6 alpha and 6 beta chains. The basic functional unit of phycobiliproteins is a ring-shaped hexamer formed from two back-to-back trimers contacting via the alpha chain subunits. The trimers are composed of alpha/beta subunit heterodimers arranged around a three-fold axis of symmetry. The phycoerythrins also contain a gamma subunit which is located in the center of the hexamer. Contains two covalently linked phycoerythrobilin chromophores.

The protein localises to the plastid. It is found in the chloroplast thylakoid membrane. In terms of biological role, light-harvesting photosynthetic tetrapyrrole chromophore-protein from the phycobiliprotein complex. This Griffithsia monilis (Red alga) protein is R-phycoerythrin alpha chain (cpeA).